Here is a 356-residue protein sequence, read N- to C-terminus: Dual-specificity RNA methyltransferase RlmN (356 aa).

Residue glutamate 89 is the Proton acceptor of the active site. The Radical SAM core domain maps to 108–341; that stretch reads KHARYTICVS…CTIRESKGLD (234 aa). Cysteine 115 and cysteine 346 are disulfide-bonded. The [4Fe-4S] cluster site is built by cysteine 122, cysteine 126, and cysteine 129. S-adenosyl-L-methionine contacts are provided by residues 172–173, serine 204, 227–229, and asparagine 303; these read GE and SLH. Residue cysteine 346 is the S-methylcysteine intermediate of the active site.

It belongs to the radical SAM superfamily. RlmN family. It depends on [4Fe-4S] cluster as a cofactor.

Its subcellular location is the cytoplasm. It carries out the reaction adenosine(2503) in 23S rRNA + 2 reduced [2Fe-2S]-[ferredoxin] + 2 S-adenosyl-L-methionine = 2-methyladenosine(2503) in 23S rRNA + 5'-deoxyadenosine + L-methionine + 2 oxidized [2Fe-2S]-[ferredoxin] + S-adenosyl-L-homocysteine. The enzyme catalyses adenosine(37) in tRNA + 2 reduced [2Fe-2S]-[ferredoxin] + 2 S-adenosyl-L-methionine = 2-methyladenosine(37) in tRNA + 5'-deoxyadenosine + L-methionine + 2 oxidized [2Fe-2S]-[ferredoxin] + S-adenosyl-L-homocysteine. In terms of biological role, specifically methylates position 2 of adenine 2503 in 23S rRNA and position 2 of adenine 37 in tRNAs. m2A2503 modification seems to play a crucial role in the proofreading step occurring at the peptidyl transferase center and thus would serve to optimize ribosomal fidelity. The chain is Dual-specificity RNA methyltransferase RlmN from Campylobacter lari (strain RM2100 / D67 / ATCC BAA-1060).